Here is a 301-residue protein sequence, read N- to C-terminus: Homoserine O-acetyltransferase (301 aa).

The active-site Acyl-thioester intermediate is the Cys-142. Substrate contacts are provided by Lys-163 and Ser-192. His-235 acts as the Proton acceptor in catalysis. Glu-237 is a catalytic residue. A substrate-binding site is contributed by Arg-249.

Belongs to the MetA family.

The protein resides in the cytoplasm. It carries out the reaction L-homoserine + acetyl-CoA = O-acetyl-L-homoserine + CoA. It functions in the pathway amino-acid biosynthesis; L-methionine biosynthesis via de novo pathway; O-acetyl-L-homoserine from L-homoserine: step 1/1. In terms of biological role, transfers an acetyl group from acetyl-CoA to L-homoserine, forming acetyl-L-homoserine. The polypeptide is Homoserine O-acetyltransferase (Bacillus subtilis (strain 168)).